The chain runs to 297 residues: Ribosomal RNA small subunit methyltransferase A (297 aa).

S-adenosyl-L-methionine contacts are provided by asparagine 31, leucine 33, glycine 58, glutamate 79, aspartate 104, and asparagine 129.

Belongs to the class I-like SAM-binding methyltransferase superfamily. rRNA adenine N(6)-methyltransferase family. RsmA subfamily.

Its subcellular location is the cytoplasm. The catalysed reaction is adenosine(1518)/adenosine(1519) in 16S rRNA + 4 S-adenosyl-L-methionine = N(6)-dimethyladenosine(1518)/N(6)-dimethyladenosine(1519) in 16S rRNA + 4 S-adenosyl-L-homocysteine + 4 H(+). Its function is as follows. Specifically dimethylates two adjacent adenosines (A1518 and A1519) in the loop of a conserved hairpin near the 3'-end of 16S rRNA in the 30S particle. May play a critical role in biogenesis of 30S subunits. The protein is Ribosomal RNA small subunit methyltransferase A of Staphylococcus aureus (strain Newman).